Consider the following 775-residue polypeptide: Protein STRUBBELIG-RECEPTOR FAMILY 1 (775 aa).

Positions 1 to 31 (MRSMRSGRDNNICFLGFLSFALISLPSLSLA) are cleaved as a signal peptide. At 32–314 (LTNPDDVAAI…GKEDSFTSKR (283 aa)) the chain is on the extracellular side. 6 LRR repeats span residues 101 to 122 (SLKA…TLPV), 123 to 146 (SLQN…SSLK), 147 to 169 (SLSV…FQDL), 171 to 193 (LMIN…MQNL), 195 to 217 (TLTS…QDLP), and 218 to 238 (LKDL…KLLS). An N-linked (GlcNAc...) asparagine glycan is attached at N133. N181 and N192 each carry an N-linked (GlcNAc...) asparagine glycan. N250 carries N-linked (GlcNAc...) asparagine glycosylation. Residues 254–308 (APSPSPETPPSPTSPKRPFFGPPSPNASAGHGQAHVRSPPSDHHPSRPTPQGKED) are disordered. Positions 256–278 (SPSPETPPSPTSPKRPFFGPPSP) are enriched in pro residues. N-linked (GlcNAc...) asparagine glycosylation is present at N279. Residues 315–335 (IIWISILGAFSFVVLALVCLL) form a helical membrane-spanning segment. Topologically, residues 336-775 (CGRKCLRKRE…NGDNQYTGRR (440 aa)) are cytoplasmic. Positions 345–414 (EDSEQLSKPH…VGSESKQESH (70 aa)) are disordered. Over residues 367–379 (RSNASMLPPSNTF) the composition is skewed to polar residues. A compositionally biased stretch (basic and acidic residues) spans 380 to 391 (NKDKEARPKERV). One can recognise a Protein kinase domain in the interval 478–756 (FSHENLIGTG…EVVQDLSDMI (279 aa)).

This sequence belongs to the protein kinase superfamily. Ser/Thr protein kinase family. In terms of tissue distribution, expressed in roots, stems, leaves and flowers. Low expression in seedlings and siliques.

Its subcellular location is the membrane. Its function is as follows. Not essential for epidermal patterning and not redundant with STRUBBELIG. In Arabidopsis thaliana (Mouse-ear cress), this protein is Protein STRUBBELIG-RECEPTOR FAMILY 1 (SRF1).